Reading from the N-terminus, the 540-residue chain is Ipecac alkaloid beta-glucosidase 9 (540 aa).

A beta-D-glucoside contacts are provided by residues Gln-36, His-140, 185–186 (NE), Tyr-350, Glu-421, Trp-470, and Phe-486. Glu-186 functions as the Proton donor in the catalytic mechanism. Glu-421 (nucleophile) is an active-site residue.

Belongs to the glycosyl hydrolase 1 family.

Its subcellular location is the cytoplasm. The protein resides in the cytosol. It catalyses the reaction deacetylipecoside + H2O = deacetylipecoside aglycone + D-glucose. The enzyme catalyses deacetylisoipecoside + H2O = deacetylisoipecoside aglycone + D-glucose. Its pathway is alkaloid biosynthesis. Its function is as follows. Beta-glucosidase catalyzing deglucosylation on N-deacetylisoipecoside and N-deacetylipecoside. This chain is Ipecac alkaloid beta-glucosidase 9, found in Carapichea ipecacuanha (Ipecac).